The sequence spans 293 residues: MAQPIGRKPEWLKIKMASGASFAATRQLLNRHSLHTVCRSALCPNLQECWSRGTATFLLLGNTCTRSCTFCAVSKASAPPAPDSDEPQKIAEAIASMKLKHAVLTSVTRDDLPDGGANHWIATMQAIRQRTPNVSLECLIPDFQHKKAALDSVMQATPDVLNHNIESVPSLYSTVRPQANYRASLELLRYAKEQHGLATKSGLMVGMGEERHEVEATLHDLAAHGCDMVTIGQYLQPSAAHLPVARYVPPQEFEEYSTIAKNAGIRYVHAAPFVRSSYHAETFPNNLTITQNL.

[4Fe-4S] cluster contacts are provided by Cys-38, Cys-43, Cys-49, Cys-64, Cys-68, Cys-71, and Ser-277. Positions 50-266 (WSRGTATFLL…STIAKNAGIR (217 aa)) constitute a Radical SAM core domain.

The protein belongs to the radical SAM superfamily. Lipoyl synthase family. It depends on [4Fe-4S] cluster as a cofactor.

The protein resides in the cytoplasm. The enzyme catalyses [[Fe-S] cluster scaffold protein carrying a second [4Fe-4S](2+) cluster] + N(6)-octanoyl-L-lysyl-[protein] + 2 oxidized [2Fe-2S]-[ferredoxin] + 2 S-adenosyl-L-methionine + 4 H(+) = [[Fe-S] cluster scaffold protein] + N(6)-[(R)-dihydrolipoyl]-L-lysyl-[protein] + 4 Fe(3+) + 2 hydrogen sulfide + 2 5'-deoxyadenosine + 2 L-methionine + 2 reduced [2Fe-2S]-[ferredoxin]. Its pathway is protein modification; protein lipoylation via endogenous pathway; protein N(6)-(lipoyl)lysine from octanoyl-[acyl-carrier-protein]: step 2/2. In terms of biological role, catalyzes the radical-mediated insertion of two sulfur atoms into the C-6 and C-8 positions of the octanoyl moiety bound to the lipoyl domains of lipoate-dependent enzymes, thereby converting the octanoylated domains into lipoylated derivatives. This chain is Lipoyl synthase, found in Chlorobium chlorochromatii (strain CaD3).